The sequence spans 222 residues: Phosphoribosylformylglycinamidine synthase subunit PurQ (222 aa).

Positions Ala3–Ala222 constitute a Glutamine amidotransferase type-1 domain. Cys86 acts as the Nucleophile in catalysis. Active-site residues include His194 and Glu196.

As to quaternary structure, part of the FGAM synthase complex composed of 1 PurL, 1 PurQ and 2 PurS subunits.

It localises to the cytoplasm. It carries out the reaction N(2)-formyl-N(1)-(5-phospho-beta-D-ribosyl)glycinamide + L-glutamine + ATP + H2O = 2-formamido-N(1)-(5-O-phospho-beta-D-ribosyl)acetamidine + L-glutamate + ADP + phosphate + H(+). It catalyses the reaction L-glutamine + H2O = L-glutamate + NH4(+). Its pathway is purine metabolism; IMP biosynthesis via de novo pathway; 5-amino-1-(5-phospho-D-ribosyl)imidazole from N(2)-formyl-N(1)-(5-phospho-D-ribosyl)glycinamide: step 1/2. In terms of biological role, part of the phosphoribosylformylglycinamidine synthase complex involved in the purines biosynthetic pathway. Catalyzes the ATP-dependent conversion of formylglycinamide ribonucleotide (FGAR) and glutamine to yield formylglycinamidine ribonucleotide (FGAM) and glutamate. The FGAM synthase complex is composed of three subunits. PurQ produces an ammonia molecule by converting glutamine to glutamate. PurL transfers the ammonia molecule to FGAR to form FGAM in an ATP-dependent manner. PurS interacts with PurQ and PurL and is thought to assist in the transfer of the ammonia molecule from PurQ to PurL. The polypeptide is Phosphoribosylformylglycinamidine synthase subunit PurQ (Ruegeria pomeroyi (strain ATCC 700808 / DSM 15171 / DSS-3) (Silicibacter pomeroyi)).